The sequence spans 397 residues: Cytochrome b (397 aa).

Helical transmembrane passes span 38 to 58 (FGSL…FLAM), 82 to 104 (WLLR…LHIF), 119 to 139 (VWCL…IGYV), and 185 to 205 (FFSL…LHLA). Heme b contacts are provided by His-88 and His-102. 2 residues coordinate heme b: His-189 and His-203. His-208 is a binding site for a ubiquinone. A run of 4 helical transmembrane segments spans residues 231-251 (FYVK…IWIF), 295-315 (AGGV…PFFK), 327-347 (IYQG…WIGC), and 354-373 (FVTI…AITP).

It belongs to the cytochrome b family. In terms of assembly, the main subunits of complex b-c1 are: cytochrome b, cytochrome c1 and the Rieske protein. Heme b serves as cofactor.

It is found in the mitochondrion inner membrane. Its function is as follows. Component of the ubiquinol-cytochrome c reductase complex (complex III or cytochrome b-c1 complex) that is part of the mitochondrial respiratory chain. The b-c1 complex mediates electron transfer from ubiquinol to cytochrome c. Contributes to the generation of a proton gradient across the mitochondrial membrane that is then used for ATP synthesis. The chain is Cytochrome b (MT-CYB) from Oryza sativa subsp. japonica (Rice).